The sequence spans 469 residues: MKKYVLLLSILFISVAFSQESVEDLKRLLEEYKKKIQEIERRLEELEKAKKEEEKKKEAVALKPTPADRTLKIRTKYEERLGAYQVSPFSQKAFLPDISLILDFSFVGRNKKDSELKELEIPALYHGHGGHEHGELNEKRGFNLNYAELFLYAPVDPYFDLYATIPFSEDGSTVEEAYAVTRGLPYGFQVKVGKFRSSFGRLNSQHPHVWEFANPPLVYKVFLGEGLIEKGVQVNWLAPVPFYLLLGAEVLQGENEMSFGTEGFSVNEDLRVPDTPKPNLYVGFLKTSFDVGNLSLLGGISYAYGRTRINHLEDEEEPHAFAGRTKIYGLDLTAKYFIDSYRYLAFQGEYLYRRQEGTKYTPESTSPLTKKQGGLYAQVVWKFDRRWRTGIQYNLINKNELKVNGIKKDLPDDLSAYYWMLEFNPTEFSRIRLQLGQNRAFYKEDKRKTINEFIFQFNFVIGAHTSHPF.

A coiled-coil region spans residues 11–65 (LFISVAFSQESVEDLKRLLEEYKKKIQEIERRLEELEKAKKEEEKKKEAVALKPT).

This is an uncharacterized protein from Aquifex aeolicus (strain VF5).